A 444-amino-acid polypeptide reads, in one-letter code: Acyl-CoA 6-desaturase (444 aa).

Residues 1–21 are disordered; sequence MGKGGNQGEGSTERQAPMPTF. Residues 1-130 lie on the Cytoplasmic side of the membrane; the sequence is MGKGGNQGEG…EDMNLFKTNH (130 aa). Positions 18-95 constitute a Cytochrome b5 heme-binding domain; sequence MPTFRWEEIQ…LKPLLIGELA (78 aa). Residues 131-151 form a helical membrane-spanning segment; that stretch reads LFFFLLLSHIIVMESLAWFIL. Position 152 (serine 152) is a topological domain, lumenal. Residues 153–173 traverse the membrane as a helical segment; that stretch reads YFGTGWIPTLVTAFVLATSQA. Residues 174-264 lie on the Cytoplasmic side of the membrane; the sequence is QAGWLQHDYG…KYLPYNHQHE (91 aa). The short motif at 180 to 184 is the Histidine box-1 element; it reads HDYGH. A Histidine box-2 motif is present at residues 217–221; it reads HFQHH. The chain crosses the membrane as a helical span at residues 265–285; sequence YFFLIGPPLLIPMYFQYQIIM. At 286–305 the chain is on the lumenal side; the sequence is TMISRRDWVDLAWAISYYMR. A helical transmembrane segment spans residues 306-326; sequence FFYTYIPFYGILGALVFLNFI. Residues 327–444 are Cytoplasmic-facing; the sequence is RFLESHWFVW…ELWLDAYLHK (118 aa). Positions 382 to 386 match the Histidine box-3 motif; that stretch reads QIEHH.

Belongs to the fatty acid desaturase type 1 family. Highly expressed in the adrenal gland, liver, brain, and testis, tissues where lipogenesis and steroidogenesis are active. Also detected in lung, heart, and skeletal muscle.

It localises to the endoplasmic reticulum membrane. It catalyses the reaction (9Z,12Z)-octadecadienoyl-CoA + 2 Fe(II)-[cytochrome b5] + O2 + 2 H(+) = (6Z,9Z,12Z)-octadecatrienoyl-CoA + 2 Fe(III)-[cytochrome b5] + 2 H2O. The catalysed reaction is (9Z,12Z,15Z)-octadecatrienoyl-CoA + 2 Fe(II)-[cytochrome b5] + O2 + 2 H(+) = (6Z,9Z,12Z,15Z)-octadecatetraenoyl-CoA + 2 Fe(III)-[cytochrome b5] + 2 H2O. It carries out the reaction (9Z,12Z,15Z,18Z,21Z)-tetracosapentaenoyl-CoA + 2 Fe(II)-[cytochrome b5] + O2 + 2 H(+) = (6Z,9Z,12Z,15Z,18Z,21Z)-tetracosahexaenoyl-CoA + 2 Fe(III)-[cytochrome b5] + 2 H2O. The enzyme catalyses (11E)-octadecenoyl-CoA + 2 Fe(II)-[cytochrome b5] + O2 + 2 H(+) = (6Z,11E)-octadecadienoyl-CoA + 2 Fe(III)-[cytochrome b5] + 2 H2O. It catalyses the reaction (11Z,14Z)-eicosadienoyl-CoA + 2 Fe(II)-[cytochrome b5] + O2 + 2 H(+) = (8Z,11Z,14Z)-eicosatrienoyl-CoA + 2 Fe(III)-[cytochrome b5] + 2 H2O. The catalysed reaction is (11Z,14Z,17Z)-eicosatrienoyl-CoA + 2 Fe(II)-[cytochrome b5] + O2 + 2 H(+) = (8Z,11Z,14Z,17Z)-eicosatetraenoyl-CoA + 2 Fe(III)-[cytochrome b5] + 2 H2O. Its pathway is lipid metabolism; polyunsaturated fatty acid biosynthesis. Its function is as follows. Involved in the biosynthesis of highly unsaturated fatty acids (HUFA) from the essential polyunsaturated fatty acids (PUFA) linoleic acid (LA) (18:2n-6) and alpha-linolenic acid (ALA) (18:3n-3) precursors, acting as a fatty acyl-coenzyme A (CoA) desaturase that introduces a cis double bond at carbon 6 of the fatty acyl chain. Catalyzes the first and rate limiting step in this pathway which is the desaturation of LA (18:2n-6) and ALA (18:3n-3) into gamma-linoleate (GLA) (18:3n-6) and stearidonate (18:4n-3), respectively. Subsequently, in the biosynthetic pathway of HUFA n-3 series, it desaturates tetracosapentaenoate (24:5n-3) to tetracosahexaenoate (24:6n-3), which is then converted to docosahexaenoate (DHA)(22:6n-3), an important lipid for nervous system function. It can also desaturate (11E)-octadecenoate (trans-vaccenoate) at carbon 6 generating (6Z,11E)-octadecadienoate. In addition to Delta-6 activity, this enzyme exhibits Delta-8 activity with slight biases toward n-3 fatty acyl-CoA substrates. The protein is Acyl-CoA 6-desaturase of Mus musculus (Mouse).